Consider the following 156-residue polypeptide: 6,7-dimethyl-8-ribityllumazine synthase (156 aa).

5-amino-6-(D-ribitylamino)uracil contacts are provided by residues phenylalanine 23, alanine 57–glutamate 59, and alanine 81–isoleucine 83. Alanine 86–threonine 87 contacts (2S)-2-hydroxy-3-oxobutyl phosphate. Histidine 89 serves as the catalytic Proton donor. Phenylalanine 114 serves as a coordination point for 5-amino-6-(D-ribitylamino)uracil. Arginine 128 contacts (2S)-2-hydroxy-3-oxobutyl phosphate.

This sequence belongs to the DMRL synthase family.

The catalysed reaction is (2S)-2-hydroxy-3-oxobutyl phosphate + 5-amino-6-(D-ribitylamino)uracil = 6,7-dimethyl-8-(1-D-ribityl)lumazine + phosphate + 2 H2O + H(+). It participates in cofactor biosynthesis; riboflavin biosynthesis; riboflavin from 2-hydroxy-3-oxobutyl phosphate and 5-amino-6-(D-ribitylamino)uracil: step 1/2. In terms of biological role, catalyzes the formation of 6,7-dimethyl-8-ribityllumazine by condensation of 5-amino-6-(D-ribitylamino)uracil with 3,4-dihydroxy-2-butanone 4-phosphate. This is the penultimate step in the biosynthesis of riboflavin. The chain is 6,7-dimethyl-8-ribityllumazine synthase from Campylobacter concisus (strain 13826).